We begin with the raw amino-acid sequence, 187 residues long: Cerebral dopamine neurotrophic factor (187 aa).

The first 24 residues, 1 to 24 (MRCTSPAALVTFCAGLWISNHVLA), serve as a signal peptide directing secretion. Intrachain disulfides connect Cys37–Cys124, Cys40–Cys113, and Cys71–Cys82.

This sequence belongs to the ARMET family.

It localises to the secreted. Functionally, trophic factor for dopamine neurons. Prevents the 6-hydroxydopamine (6-OHDA)-induced degeneration of dopaminergic neurons. When administered after 6-OHDA-lesioning, restores the dopaminergic function and prevents the degeneration of dopaminergic neurons in substantia nigra. The polypeptide is Cerebral dopamine neurotrophic factor (Cdnf) (Rattus norvegicus (Rat)).